The primary structure comprises 344 residues: Uroporphyrinogen decarboxylase (344 aa).

Residues 26-30 (RQAGR), Asp76, Tyr152, Ser207, and His323 each bind substrate.

The protein belongs to the uroporphyrinogen decarboxylase family. In terms of assembly, homodimer.

Its subcellular location is the cytoplasm. The enzyme catalyses uroporphyrinogen III + 4 H(+) = coproporphyrinogen III + 4 CO2. The protein operates within porphyrin-containing compound metabolism; protoporphyrin-IX biosynthesis; coproporphyrinogen-III from 5-aminolevulinate: step 4/4. Catalyzes the decarboxylation of four acetate groups of uroporphyrinogen-III to yield coproporphyrinogen-III. This is Uroporphyrinogen decarboxylase from Hyphomonas neptunium (strain ATCC 15444).